We begin with the raw amino-acid sequence, 502 residues long: Chromatin structure-remodeling complex protein RSC58 (502 aa).

In terms of domain architecture, Bromo spans 19-134; sequence SILNAASVKC…KFSSELLLRE (116 aa). The disordered stretch occupies residues 336-378; it reads NEEGINRKQNDENNKNVDGKSNGVQDDGGDNDNDATIASANSE. A compositionally biased stretch (basic and acidic residues) spans 339-353; sequence GINRKQNDENNKNVD.

In terms of assembly, component of the two forms of the RSC complex composed of at least either RSC1 or RSC2, and ARP7, ARP9, LDB7, NPL6, RSC3, RSC30, RSC4, RSC58, RSC6, RSC8, RSC9, SFH1, STH1, HTL1 and probably RTT102. The complexes interact with histone and histone variant components of centromeric chromatin.

Its subcellular location is the nucleus. Functionally, component of the chromatin structure-remodeling complex (RSC), which is involved in transcription regulation and nucleosome positioning. RSC is responsible for the transfer of a histone octamer from a nucleosome core particle to naked DNA. The reaction requires ATP and involves an activated RSC-nucleosome intermediate. Remodeling reaction also involves DNA translocation, DNA twist and conformational change. As a reconfigurer of centromeric and flanking nucleosomes, RSC complex is required both for proper kinetochore function in chromosome segregation and, via a PKC1-dependent signaling pathway, for organization of the cellular cytoskeleton. The polypeptide is Chromatin structure-remodeling complex protein RSC58 (RSC58) (Saccharomyces cerevisiae (strain ATCC 204508 / S288c) (Baker's yeast)).